Here is a 638-residue protein sequence, read N- to C-terminus: Threonine--tRNA ligase (638 aa).

The TGS domain maps to 1–61; it reads MPIITLPDGT…DYDAEIKIIT (61 aa). The tract at residues 242 to 533 is catalytic; the sequence is DHRKIGKKMD…LIENYAGNFP (292 aa). Zn(2+)-binding residues include cysteine 333, histidine 384, and histidine 510.

This sequence belongs to the class-II aminoacyl-tRNA synthetase family. In terms of assembly, homodimer. Zn(2+) is required as a cofactor.

The protein resides in the cytoplasm. It carries out the reaction tRNA(Thr) + L-threonine + ATP = L-threonyl-tRNA(Thr) + AMP + diphosphate + H(+). Its function is as follows. Catalyzes the attachment of threonine to tRNA(Thr) in a two-step reaction: L-threonine is first activated by ATP to form Thr-AMP and then transferred to the acceptor end of tRNA(Thr). Also edits incorrectly charged L-seryl-tRNA(Thr). This is Threonine--tRNA ligase from Prochlorococcus marinus (strain MIT 9211).